We begin with the raw amino-acid sequence, 176 residues long: Peptide methionine sulfoxide reductase MsrA (176 aa).

Cys-10 is an active-site residue.

This sequence belongs to the MsrA Met sulfoxide reductase family.

The enzyme catalyses L-methionyl-[protein] + [thioredoxin]-disulfide + H2O = L-methionyl-(S)-S-oxide-[protein] + [thioredoxin]-dithiol. It carries out the reaction [thioredoxin]-disulfide + L-methionine + H2O = L-methionine (S)-S-oxide + [thioredoxin]-dithiol. Has an important function as a repair enzyme for proteins that have been inactivated by oxidation. Catalyzes the reversible oxidation-reduction of methionine sulfoxide in proteins to methionine. This Leptospira borgpetersenii serovar Hardjo-bovis (strain L550) protein is Peptide methionine sulfoxide reductase MsrA.